The following is a 157-amino-acid chain: MAEVANNEQQAPQFNIQRVYTKDVSFETPNSPAVFQKEWNPEVKLDLDTRSAKLADDVYEVVLSLTVTAQNGGETAFLCEVQQAGIFSIAGLTEPQLAHSLGAYCPNILFPYAREAVGSLVGRGTFPQLNLAPVNFDALFAQYVQQRQAAAAEEANA.

This sequence belongs to the SecB family. Homotetramer, a dimer of dimers. One homotetramer interacts with 1 SecA dimer.

It is found in the cytoplasm. Functionally, one of the proteins required for the normal export of preproteins out of the cell cytoplasm. It is a molecular chaperone that binds to a subset of precursor proteins, maintaining them in a translocation-competent state. It also specifically binds to its receptor SecA. The sequence is that of Protein-export protein SecB from Shewanella oneidensis (strain ATCC 700550 / JCM 31522 / CIP 106686 / LMG 19005 / NCIMB 14063 / MR-1).